A 284-amino-acid chain; its full sequence is Efem/EfeO family lipoprotein (284 aa).

Positions 1–17 (MKKLTTLLLASTLLIAA) are cleaved as a signal peptide. The N-palmitoyl cysteine moiety is linked to residue cysteine 18. Residue cysteine 18 is the site of S-diacylglycerol cysteine attachment.

Belongs to the EfeM/EfeO family.

It localises to the cell membrane. This Staphylococcus aureus (strain NCTC 8325 / PS 47) protein is Efem/EfeO family lipoprotein.